Here is a 1119-residue protein sequence, read N- to C-terminus: MGRVEDMGLNAKLMKLETELFDYQYNMGLLLIEKKEWTSKFEELQQVYTETKDALKQEQEAHLIAISDAEKREENLTKALGVEKQCVLDLEKALRDMRSDYAEIKFTSDSKLAEASALITKVEEKSLEVESKLHSADAKLAELSRKGSDIERKSHELEARESALRRERLALNAEREALTDNISRQREDLREWERKLQEDEERLAEVRRLLNQREERANENDRLYQQKQSELDGEQKKIEIIMVSLKNKEDDISSRIAKLNIKEKEADAVKHSLEVKEKDLTEFEQKLNAREQSEIQKLLDEHKAILEVKKQSFEMEMDKRKNDFENDLQNRAVEVEKKEVEVKHLEAKLAKREHALDQKHEKLKEKEQYLASKLQDLNEREKSMKLEENKIEDERNQLLSDKQEMLCLKAEIEKDRASTEEQRLKLSEEIERLKITEEERLELARLQSELKQEIENCRHQRELLLKEEDELKQEKMRFEKEWEDLDERRTALMKDLKDITVQKENFEKLKHSEEDRLNNKKLDTESYVQKELDALRLTKDSFAATMEHEKAVLAERTSSEKKQMLNDFELWKRELETKLFNEREDMENALRLREKQFDEEREKELNNINYIKEVISKEREDIKLERSRIAKEKQEILMHQKHLDEQHVVMQKDIGQLVSLSEKLKDQREQFFKERECFIRFVESQKSCKNCGEMTSEFVVSDLQSLAELENLKALSVPQLAENYLRQDLQGTPDKNLSTVTPGAVGLGSPASGGTKSWLQKCTSKIFIFSASKKNNSPDQNTSRRLHVEASPNKLLNTEVIPELPSGVAGETLEMQNMQVSNSNREMESNLNLSGTEQSNIDSKALDVEDSQQSDVRAGNRKPGKRAKGRVRRKRSAKEVAEEAKTVLADPIELNENEHSNGLASAYTNESRGDSSLVGKRTRNSRKRNPSQPSQSAAGDVGADSEGHSDSVTAGGRQKRRRKVVPAVQAPTGRYNLRRHKTAAPLVANGALSDPNKGKEKEIDDGGGIGEEIPDEVDGNTHLVQVTTLKKRINVVNEFSSAGFHGINATSESQDRDAANQLVSDTMLSEEVNGTPEQSRGYQNQGDTSGAEGEDEDGDEVEHPGEVSMRKKVWKFLTT.

Coiled coils occupy residues 140 to 226 (LAEL…LYQQ) and 328 to 488 (LQNR…LDER). Disordered regions lie at residues 846–884 (LDVEDSQQSDVRAGNRKPGKRAKGRVRRKRSAKEVAEEA), 903–974 (LASA…PTGR), 989–1015 (NGALSDPNKGKEKEIDDGGGIGEEIPD), and 1046–1109 (GINA…EVSM). Composition is skewed to basic residues over residues 859-876 (GNRKPGKRAKGRVRRKRS) and 920-929 (KRTRNSRKRN). The segment covering 1075-1085 (TPEQSRGYQNQ) has biased composition (polar residues).

The protein belongs to the CRWN family.

It localises to the nucleus matrix. Its subcellular location is the nucleus lamina. In terms of biological role, architectural component of nuclear structure that plays different roles in controlling nuclear size and morphology. This is Nuclear matrix constituent protein 1 from Daucus carota subsp. sativus (Carrot).